A 98-amino-acid polypeptide reads, in one-letter code: Small ribosomal subunit protein bS20 (98 aa).

Residues M1–P12 are compositionally biased toward basic residues. The interval M1–R31 is disordered.

It belongs to the bacterial ribosomal protein bS20 family.

Its function is as follows. Binds directly to 16S ribosomal RNA. The chain is Small ribosomal subunit protein bS20 from Chlamydia trachomatis serovar L2 (strain ATCC VR-902B / DSM 19102 / 434/Bu).